We begin with the raw amino-acid sequence, 123 residues long: WAP four-disulfide core domain protein 5 (123 aa).

Residues 1–24 form the signal peptide; sequence MRIQSLLLLGALLAVGSQLPAVFG. 2 WAP domains span residues 27-73 and 74-121; these read KGEK…CVPR and VSVK…RDPA. Disulfide bonds link Cys34-Cys62, Cys41-Cys66, Cys49-Cys61, Cys55-Cys70, Cys81-Cys109, Cys88-Cys113, Cys96-Cys108, and Cys102-Cys117.

The protein resides in the secreted. In terms of biological role, putative acid-stable proteinase inhibitor. This chain is WAP four-disulfide core domain protein 5 (WFDC5), found in Papio anubis (Olive baboon).